The following is a 75-amino-acid chain: Small ribosomal subunit protein bS18 (75 aa).

It belongs to the bacterial ribosomal protein bS18 family. As to quaternary structure, part of the 30S ribosomal subunit. Forms a tight heterodimer with protein bS6.

In terms of biological role, binds as a heterodimer with protein bS6 to the central domain of the 16S rRNA, where it helps stabilize the platform of the 30S subunit. This Desulforudis audaxviator (strain MP104C) protein is Small ribosomal subunit protein bS18.